Here is a 221-residue protein sequence, read N- to C-terminus: Protein FixW (221 aa).

The Thioredoxin domain occupies 5 to 156 (LNLGSPAPPI…LPKVIDGNWR (152 aa)). Residues C43 and C46 are joined by a disulfide bond.

It belongs to the thioredoxin family.

This chain is Protein FixW (fixW), found in Rhizobium leguminosarum.